The sequence spans 215 residues: Large ribosomal subunit protein uL1 (215 aa).

Belongs to the universal ribosomal protein uL1 family. As to quaternary structure, part of the 50S ribosomal subunit.

Its function is as follows. Binds directly to 23S rRNA. Probably involved in E site tRNA release. In terms of biological role, protein L1 is also a translational repressor protein, it controls the translation of its operon by binding to its mRNA. The polypeptide is Large ribosomal subunit protein uL1 (Staphylothermus marinus (strain ATCC 43588 / DSM 3639 / JCM 9404 / F1)).